We begin with the raw amino-acid sequence, 158 residues long: NADH-quinone oxidoreductase subunit B (158 aa).

4 residues coordinate [4Fe-4S] cluster: Cys-37, Cys-38, Cys-102, and Cys-132.

The protein belongs to the complex I 20 kDa subunit family. As to quaternary structure, NDH-1 is composed of 14 different subunits. Subunits NuoB, C, D, E, F, and G constitute the peripheral sector of the complex. Requires [4Fe-4S] cluster as cofactor.

Its subcellular location is the cell inner membrane. The catalysed reaction is a quinone + NADH + 5 H(+)(in) = a quinol + NAD(+) + 4 H(+)(out). Functionally, NDH-1 shuttles electrons from NADH, via FMN and iron-sulfur (Fe-S) centers, to quinones in the respiratory chain. Couples the redox reaction to proton translocation (for every two electrons transferred, four hydrogen ions are translocated across the cytoplasmic membrane), and thus conserves the redox energy in a proton gradient. This is NADH-quinone oxidoreductase subunit B from Legionella pneumophila (strain Paris).